A 279-amino-acid chain; its full sequence is MRDLRKLIPRLRGPGTNVLKMKKPLPLHMRTKIREHLNKSDPTVKDDKSAKPELPFGKPADRVPFWHIFKGDYVYVHQGPLKGKWGRVVETNKYTNGITIEGVNVRSVKVPIFLLRNKPEDNQDPVIDIAHEVHYANVRLLAHAKTDAGEPVLIPVKLKKHSSTNLRSIIRPNIEGVQIHTIHLPRPKTEDKPKDPEGKLDTKNPVVSKVTWSPSLSEPPLPPFAIGDLRANWSRRLDRIWGYKKNNDDFTEIAKDLVRAETAAEDLIKKPISPNTYSD.

Residues 1–31 (MRDLRKLIPRLRGPGTNVLKMKKPLPLHMRT) constitute a mitochondrion transit peptide. The span at 34-51 (REHLNKSDPTVKDDKSAK) shows a compositional bias: basic and acidic residues. The disordered stretch occupies residues 34–56 (REHLNKSDPTVKDDKSAKPELPF). A KOW domain is found at 70-100 (KGDYVYVHQGPLKGKWGRVVETNKYTNGITI). The interval 185-204 (PRPKTEDKPKDPEGKLDTKN) is disordered. A compositionally biased stretch (basic and acidic residues) spans 187 to 202 (PKTEDKPKDPEGKLDT).

This sequence belongs to the universal ribosomal protein uL24 family. As to quaternary structure, component of the mitochondrial large ribosomal subunit (mt-LSU). Mature yeast 74S mitochondrial ribosomes consist of a small (37S) and a large (54S) subunit. The 37S small subunit contains a 15S ribosomal RNA (15S mt-rRNA) and at least 32 different proteins. The 54S large subunit contains a 21S rRNA (21S mt-rRNA) and at least 45 different proteins. uL24m forms the wall of the exit tunnel.

The protein resides in the mitochondrion. In terms of biological role, component of the mitochondrial ribosome (mitoribosome), a dedicated translation machinery responsible for the synthesis of mitochondrial genome-encoded proteins, including at least some of the essential transmembrane subunits of the mitochondrial respiratory chain. The mitoribosomes are attached to the mitochondrial inner membrane and translation products are cotranslationally integrated into the membrane. The sequence is that of Large ribosomal subunit protein uL24m (mrpl40) from Schizosaccharomyces pombe (strain 972 / ATCC 24843) (Fission yeast).